Reading from the N-terminus, the 1434-residue chain is DNA-directed RNA polymerase subunit beta (1434 aa).

The protein belongs to the RNA polymerase beta chain family. In terms of assembly, the RNAP catalytic core consists of 2 alpha, 1 beta, 1 beta' and 1 omega subunit. When a sigma factor is associated with the core the holoenzyme is formed, which can initiate transcription.

It catalyses the reaction RNA(n) + a ribonucleoside 5'-triphosphate = RNA(n+1) + diphosphate. In terms of biological role, DNA-dependent RNA polymerase catalyzes the transcription of DNA into RNA using the four ribonucleoside triphosphates as substrates. This chain is DNA-directed RNA polymerase subunit beta, found in Ureaplasma parvum serovar 3 (strain ATCC 700970).